We begin with the raw amino-acid sequence, 345 residues long: S-adenosylmethionine:tRNA ribosyltransferase-isomerase (345 aa).

Belongs to the QueA family. Monomer.

The protein localises to the cytoplasm. It catalyses the reaction 7-aminomethyl-7-carbaguanosine(34) in tRNA + S-adenosyl-L-methionine = epoxyqueuosine(34) in tRNA + adenine + L-methionine + 2 H(+). It participates in tRNA modification; tRNA-queuosine biosynthesis. Transfers and isomerizes the ribose moiety from AdoMet to the 7-aminomethyl group of 7-deazaguanine (preQ1-tRNA) to give epoxyqueuosine (oQ-tRNA). This Acinetobacter baumannii (strain ATCC 17978 / DSM 105126 / CIP 53.77 / LMG 1025 / NCDC KC755 / 5377) protein is S-adenosylmethionine:tRNA ribosyltransferase-isomerase.